The primary structure comprises 340 residues: Spermidine synthase 2 (340 aa).

The interval 1-41 (MSSTQEASVTDLPVKRPREAEEDNNGGAMETENGGGEIKEP) is disordered. Position 2 is an N-acetylserine (Ser2). The PABS domain occupies 49 to 286 (PGWFSEISPM…GVIGFMLCSS (238 aa)). Residue Gln80 coordinates S-adenosyl 3-(methylsulfanyl)propylamine. Residue Tyr110 coordinates putrescine. S-adenosyl 3-(methylsulfanyl)propylamine-binding positions include Gln111, Asp135, Glu155, 186 to 187 (DG), and Asp205. The active-site Proton acceptor is Asp205. Residues 205-208 (DSSD) and Tyr274 contribute to the putrescine site.

Belongs to the spermidine/spermine synthase family. As to quaternary structure, heterodimer. Component of a multiprotein complex. Interacts with SPMS and SPDSYN1.

The enzyme catalyses S-adenosyl 3-(methylsulfanyl)propylamine + putrescine = S-methyl-5'-thioadenosine + spermidine + H(+). It participates in amine and polyamine biosynthesis; spermidine biosynthesis; spermidine from putrescine: step 1/1. This is Spermidine synthase 2 (SPDSYN2) from Arabidopsis thaliana (Mouse-ear cress).